The primary structure comprises 213 residues: Heterochromatin protein 1 (213 aa).

Disordered stretches follow at residues 1–24 (MGKK…EEEY) and 74–151 (RKDE…TGFD). The region spanning 24–82 (YAVEKILDRRVRKGKVEYYLKWKGYAETENTWEPEGNLDCQDLIQQYELSRKDEANAAA) is the Chromo 1 domain. Residues 89–104 (SKKERPGSSTKVKETG) are compositionally biased toward basic and acidic residues. The span at 105-115 (RTSTTASNSSG) shows a compositional bias: polar residues. One can recognise a Chromo 2 domain in the interval 154-212 (LEAEKILGASDNNGRLTFLIQFKGVDQAEMVPSTVANVKIPQMVIRFYEERLSWYSDNE).

Its subcellular location is the nucleus. Its function is as follows. Structural component of heterochromatin, involved in gene repression and the modification of position-effect-variegation. Recognizes and binds histone H3 tails methylated at 'Lys-9', leading to epigenetic repression. The sequence is that of Heterochromatin protein 1 (HP1A) from Drosophila virilis (Fruit fly).